The primary structure comprises 429 residues: Ribosomal RNA small subunit methyltransferase B (429 aa).

Residues 254–260 (CAAPGGK), D277, D303, and D322 each bind S-adenosyl-L-methionine. Catalysis depends on C375, which acts as the Nucleophile.

This sequence belongs to the class I-like SAM-binding methyltransferase superfamily. RsmB/NOP family.

The protein resides in the cytoplasm. It carries out the reaction cytidine(967) in 16S rRNA + S-adenosyl-L-methionine = 5-methylcytidine(967) in 16S rRNA + S-adenosyl-L-homocysteine + H(+). Its function is as follows. Specifically methylates the cytosine at position 967 (m5C967) of 16S rRNA. The chain is Ribosomal RNA small subunit methyltransferase B from Cronobacter sakazakii (strain ATCC BAA-894) (Enterobacter sakazakii).